The following is a 944-amino-acid chain: 2-oxoglutarate dehydrogenase E1 component (944 aa).

The interval 914–944 (RRRRSSPAEGDPTVHKKEQERIVSDSLTRKN) is disordered. Basic and acidic residues predominate over residues 925 to 936 (PTVHKKEQERIV).

This sequence belongs to the alpha-ketoglutarate dehydrogenase family. As to quaternary structure, homodimer. Part of the 2-oxoglutarate dehydrogenase (OGDH) complex composed of E1 (2-oxoglutarate dehydrogenase), E2 (dihydrolipoamide succinyltransferase) and E3 (dihydrolipoamide dehydrogenase); the complex contains multiple copies of the three enzymatic components (E1, E2 and E3). The cofactor is thiamine diphosphate.

The catalysed reaction is N(6)-[(R)-lipoyl]-L-lysyl-[protein] + 2-oxoglutarate + H(+) = N(6)-[(R)-S(8)-succinyldihydrolipoyl]-L-lysyl-[protein] + CO2. E1 component of the 2-oxoglutarate dehydrogenase (OGDH) complex which catalyzes the decarboxylation of 2-oxoglutarate, the first step in the conversion of 2-oxoglutarate to succinyl-CoA and CO(2). The polypeptide is 2-oxoglutarate dehydrogenase E1 component (Bacillus licheniformis (strain ATCC 14580 / DSM 13 / JCM 2505 / CCUG 7422 / NBRC 12200 / NCIMB 9375 / NCTC 10341 / NRRL NRS-1264 / Gibson 46)).